The following is a 511-amino-acid chain: Piperic acid synthase CYP719A37 (511 aa).

Residues 7–27 form a helical membrane-spanning segment; the sequence is VDPALFSAFVSIIFFFLGMFL. Cysteine 455 contributes to the heme binding site.

It belongs to the cytochrome P450 family. Requires heme as cofactor. Specifically expressed in immature fruits and roots. Barely detectable in young leaves and flowering spadices.

The protein resides in the membrane. It is found in the endoplasmic reticulum membrane. The catalysed reaction is (E,E)-feruperate + reduced [NADPH--hemoprotein reductase] + O2 = (E,E)-piperate + oxidized [NADPH--hemoprotein reductase] + 2 H2O + H(+). Its pathway is aromatic compound metabolism. In terms of biological role, cytochrome P450 monooxygenase involved in the biosynthesis of aromatic piperamides natural products such as piperine (1-piperoyl-piperidine), the pungent principle contributing, together with several terpenoids, to the aromatic properties of black pepper fruits, and displaying numerous pharmacological activities such as antiproliferative, antitumor, antiangiogenesis, antioxidant, antidiabetic, antiobesity, cardioprotective, antimicrobial, antiaging, and immunomodulatory effects. Catalyzes the conversion of feruperic acid (5-(4-hydroxy-3-methoxyphenyl)-2,4-pentadienoic acid) to piperic acid. Inactive toward ferulic acid and feruperine. This Piper nigrum (Black pepper) protein is Piperic acid synthase CYP719A37.